Consider the following 457-residue polypeptide: tRNA-2-methylthio-N(6)-dimethylallyladenosine synthase (457 aa).

Positions 3–120 (KKVYVKTFGC…LPQMIDARRE (118 aa)) constitute an MTTase N-terminal domain. [4Fe-4S] cluster contacts are provided by C12, C49, C83, C157, C161, and C164. Residues 143-377 (RVEGPSAFVS…QATIEENVAR (235 aa)) form the Radical SAM core domain. Residues 380–447 (QSMLGKVERI…PHSLRGELVL (68 aa)) enclose the TRAM domain.

It belongs to the methylthiotransferase family. MiaB subfamily. Monomer. It depends on [4Fe-4S] cluster as a cofactor.

The protein resides in the cytoplasm. It catalyses the reaction N(6)-dimethylallyladenosine(37) in tRNA + (sulfur carrier)-SH + AH2 + 2 S-adenosyl-L-methionine = 2-methylsulfanyl-N(6)-dimethylallyladenosine(37) in tRNA + (sulfur carrier)-H + 5'-deoxyadenosine + L-methionine + A + S-adenosyl-L-homocysteine + 2 H(+). Catalyzes the methylthiolation of N6-(dimethylallyl)adenosine (i(6)A), leading to the formation of 2-methylthio-N6-(dimethylallyl)adenosine (ms(2)i(6)A) at position 37 in tRNAs that read codons beginning with uridine. This Burkholderia mallei (strain NCTC 10247) protein is tRNA-2-methylthio-N(6)-dimethylallyladenosine synthase.